The sequence spans 159 residues: Ribosomal RNA large subunit methyltransferase H (159 aa).

Residues L76, G108, and 127–132 (FGLLTL) contribute to the S-adenosyl-L-methionine site.

It belongs to the RNA methyltransferase RlmH family. In terms of assembly, homodimer.

The protein localises to the cytoplasm. The enzyme catalyses pseudouridine(1915) in 23S rRNA + S-adenosyl-L-methionine = N(3)-methylpseudouridine(1915) in 23S rRNA + S-adenosyl-L-homocysteine + H(+). Its function is as follows. Specifically methylates the pseudouridine at position 1915 (m3Psi1915) in 23S rRNA. In Streptococcus equi subsp. zooepidemicus (strain MGCS10565), this protein is Ribosomal RNA large subunit methyltransferase H.